Here is a 378-residue protein sequence, read N- to C-terminus: Copper-containing nitrite reductase (378 aa).

A signal peptide (tat-type signal) is located at residues 1-38 (MTEQLQMTRRTMLAGAALAGAVAPLLHTAQAHAAGAAA). 2 consecutive Plastocyanin-like domains span residues 39–213 (AAGA…YDKI) and 214–378 (YYVG…PASM). His-133, His-138, His-173, Cys-174, His-183, Met-188, and His-344 together coordinate Cu cation.

This sequence belongs to the multicopper oxidase family. In terms of assembly, homotrimer. The cofactor is Cu(+). Requires Cu(2+) as cofactor. FAD is required as a cofactor. In terms of processing, predicted to be exported by the Tat system. The position of the signal peptide cleavage has been experimentally proven.

It is found in the periplasm. The enzyme catalyses nitric oxide + Fe(III)-[cytochrome c] + H2O = Fe(II)-[cytochrome c] + nitrite + 2 H(+). Its pathway is nitrogen metabolism; nitrate reduction (denitrification); dinitrogen from nitrate: step 2/4. The chain is Copper-containing nitrite reductase (nirK) from Achromobacter cycloclastes.